A 413-amino-acid polypeptide reads, in one-letter code: Chloramphenicol efflux pump MT0201 (413 aa).

The next 12 membrane-spanning stretches (helical) occupy residues 23–43 (LSVLACAAFIYVTAEILPVGA), 55–75 (VVLVGTLLSWYALVAAVTTVP), 89–109 (LVVSLVCLTVSQLVSALAPNF), 110–130 (AVLAAGRVLCAVTHGLLWAVI), 150–170 (IYIGTSLALVVGSPLTAAMSL), 176–196 (LAAVCVTGAAAAVALAARLAL), 226–246 (VLTMIAVTGHFVSYTYIVVII), 256–276 (NLAWLLAAYGVAGLVSVPLVA), 286–306 (AVIVGMTGLTAAFTLLTALAF), 312–332 (AATALLGTGAIVLWGALATAV), 353–373 (GLYVTAFQIGIMAGALLGGLL), and 378–398 (LAMMLTASAGLMGVALFGMTV).

The protein belongs to the major facilitator superfamily.

It is found in the cell membrane. In terms of biological role, active efflux pump that plays an important role in chloramphenicol resistance. The protein is Chloramphenicol efflux pump MT0201 of Mycobacterium tuberculosis (strain CDC 1551 / Oshkosh).